The chain runs to 410 residues: MSKLVPPHGKEKKLKPLLLEGAALAAEKEKAKTLKVVPMTSREASDLIMLGIGAFTPLDGFMGYADWKGVCDKYTMADGVFWPIPITLSADKAVADSIGKNEEVALLDVENNEILGTMKVTEKYTIDKEHECKSVFWTNDAAGHPGVAKVMAQKEVNLAGPVKVISESFYPTQFKNVYQRPAEARKLFDEKGWRRVAALQLRNPMHRSHEFLAKIAVEVMDGLYIHQLVGKLKEGDIPADVRVKAIDVLVENYFVKDTVIQGGYPAEMRYAGPREALLHAVFRQNYGCSHLIVGRDHAGVGDYYGPFDAQKIFDDIPEGALLLQPLKIDWTFHCFKCGGMASMRTCPHGKADRLLLSGTMVRKTLSEGGELPKEFSRPEVVKVLQEYYAGLEEKVEIKLHGAATGDVKKK.

It belongs to the sulfate adenylyltransferase family.

It catalyses the reaction sulfate + ATP + H(+) = adenosine 5'-phosphosulfate + diphosphate. It functions in the pathway sulfur metabolism; hydrogen sulfide biosynthesis; sulfite from sulfate: step 1/3. This is Sulfate adenylyltransferase from Syntrophobacter fumaroxidans (strain DSM 10017 / MPOB).